A 497-amino-acid polypeptide reads, in one-letter code: Cytochrome P450 26A1 (497 aa).

C442 provides a ligand contact to heme.

This sequence belongs to the cytochrome P450 family. The cofactor is heme. Expressed in most fetal and adult tissues with highest levels in adult liver, heart, pituitary gland, adrenal gland, placenta and regions of the brain. Expressed at high levels in lung, pancreas, skin and uterus (at protein level). Lower expression level is detected in spleen, kidney, intestine and adipose tissue (at protein level).

It localises to the endoplasmic reticulum membrane. Its subcellular location is the microsome membrane. The enzyme catalyses all-trans-retinoate + reduced [NADPH--hemoprotein reductase] + O2 = all-trans-(4S)-hydroxyretinoate + oxidized [NADPH--hemoprotein reductase] + H2O + H(+). The catalysed reaction is all-trans-(4S)-hydroxyretinoate + reduced [NADPH--hemoprotein reductase] + O2 = all-trans-(4S,16)-dihydroxyretinoate + oxidized [NADPH--hemoprotein reductase] + H2O + H(+). It carries out the reaction all-trans-retinoate + reduced [NADPH--hemoprotein reductase] + O2 = all-trans-18-hydroxyretinoate + oxidized [NADPH--hemoprotein reductase] + H2O + H(+). In terms of biological role, a cytochrome P450 monooxygenase involved in the metabolism of retinoates (RAs), the active metabolites of vitamin A, and critical signaling molecules in animals. RAs exist as at least four different isomers: all-trans-RA (atRA), 9-cis-RA, 13-cis-RA, and 9,13-dicis-RA, where atRA is considered to be the biologically active isomer, although 9-cis-RA and 13-cis-RA also have activity. Catalyzes the hydroxylation of atRA primarily at C-4 and C-18, thereby contributing to the regulation of atRA homeostasis and signaling. Hydroxylation of atRA limits its biological activity and initiates a degradative process leading to its eventual elimination. Involved in the convertion of atRA to all-trans-4-oxo-RA. Able to metabolize other RAs such as 9-cis, 13-cis and 9,13-di-cis RA. Can oxidize all-trans-13,14-dihydroretinoate (DRA) to metabolites which could include all-trans-4-oxo-DRA, all-trans-4-hydroxy-DRA, all-trans-5,8-epoxy-DRA, and all-trans-18-hydroxy-DRA. May play a role in the oxidative metabolism of xenobiotics such as tazarotenic acid. This chain is Cytochrome P450 26A1, found in Homo sapiens (Human).